The following is a 96-amino-acid chain: MNPTTFIISFMIALSGLAFYQTHLLSLFLCLEGMALSVFCLMAISSSYTLSLSTIPLPLIMLTFSVCEAGLSLVLLVTMTRTHQNDLMSSLTLLKC.

3 consecutive transmembrane segments (helical) span residues 1 to 21 (MNPTTFIISFMIALSGLAFYQ), 24 to 44 (LLSLFLCLEGMALSVFCLMAI), and 57 to 77 (LPLIMLTFSVCEAGLSLVLLV).

The protein belongs to the complex I subunit 4L family.

Its subcellular location is the mitochondrion membrane. The enzyme catalyses a ubiquinone + NADH + 5 H(+)(in) = a ubiquinol + NAD(+) + 4 H(+)(out). Core subunit of the mitochondrial membrane respiratory chain NADH dehydrogenase (Complex I) which catalyzes electron transfer from NADH through the respiratory chain, using ubiquinone as an electron acceptor. Part of the enzyme membrane arm which is embedded in the lipid bilayer and involved in proton translocation. This is NADH-ubiquinone oxidoreductase chain 4L (MT-ND4L) from Myxine glutinosa (Atlantic hagfish).